Reading from the N-terminus, the 184-residue chain is Ribosome-recycling factor (184 aa).

Residues 133-153 (DSNDELKKQQKNSDITEDDLR) form a disordered region.

The protein belongs to the RRF family.

It is found in the cytoplasm. Functionally, responsible for the release of ribosomes from messenger RNA at the termination of protein biosynthesis. May increase the efficiency of translation by recycling ribosomes from one round of translation to another. This is Ribosome-recycling factor from Staphylococcus saprophyticus subsp. saprophyticus (strain ATCC 15305 / DSM 20229 / NCIMB 8711 / NCTC 7292 / S-41).